The sequence spans 471 residues: RuvB-like protein 2 (471 aa).

75–82 (GPPSTGKT) is an ATP binding site.

The protein belongs to the RuvB family. Probably forms a homohexamer. Interacts with RVB1 and may form heterododecamers with RVB1. Component of the SWR1 chromatin remodeling complex composed of at least ACT1, ARP4, RVB1, RVB2, ARP6, YAF9, VPS71, VPS72, SWC3, SWC4, SWC5, SWC7 and SWR1, and perhaps BDF1. Component of the chromatin-remodeling INO80 complex, at least composed of ARP4, ARP5, ARP8, RVB1, RVB2, TAF14, NHP10, IES1, IES3, IES4, IES6, ACT1, IES2, IES5 and INO80. Also belongs to the R2TP complex composed of at least RVB1, RVB2, TAH1 and PIH1. Interacts with SPT15/TBP.

It is found in the nucleus. Its subcellular location is the nucleoplasm. It catalyses the reaction ATP + H2O = ADP + phosphate + H(+). Functionally, DNA helicase which participates in several chromatin remodeling complexes, including the SWR1 and the INO80 complexes. The SWR1 complex mediates the ATP-dependent exchange of histone H2A for the H2A variant HZT1 leading to transcriptional regulation of selected genes by chromatin remodeling. The INO80 complex remodels chromatin by shifting nucleosomes. Its ability to induce transcription of some phosphate-responsive genes is modulated by inositol polyphosphates. The INO80 complex is involved in DNA repair by associating to 'Ser-129' phosphorylated H2A histones as a response to DNA damage. During transcription may recruit SPT15/TBP to the TATA-boxes of involved genes. Required for box C/D and box H/ACA snoRNA accumulation and involved in pre-rRNA processing. The protein is RuvB-like protein 2 (RVB2) of Saccharomyces cerevisiae (strain ATCC 204508 / S288c) (Baker's yeast).